Consider the following 253-residue polypeptide: Tryptophan synthase alpha chain (253 aa).

Catalysis depends on proton acceptor residues Glu44 and Asp55.

Belongs to the TrpA family. As to quaternary structure, tetramer of two alpha and two beta chains.

The catalysed reaction is (1S,2R)-1-C-(indol-3-yl)glycerol 3-phosphate + L-serine = D-glyceraldehyde 3-phosphate + L-tryptophan + H2O. The protein operates within amino-acid biosynthesis; L-tryptophan biosynthesis; L-tryptophan from chorismate: step 5/5. Its function is as follows. The alpha subunit is responsible for the aldol cleavage of indoleglycerol phosphate to indole and glyceraldehyde 3-phosphate. In Chlamydia trachomatis serovar D (strain ATCC VR-885 / DSM 19411 / UW-3/Cx), this protein is Tryptophan synthase alpha chain (trpA).